The sequence spans 155 residues: Ribosomal RNA large subunit methyltransferase H (155 aa).

Residues L72, G103, and 122–127 contribute to the S-adenosyl-L-methionine site; that span reads LSTMTL.

The protein belongs to the RNA methyltransferase RlmH family. In terms of assembly, homodimer.

The protein localises to the cytoplasm. It catalyses the reaction pseudouridine(1915) in 23S rRNA + S-adenosyl-L-methionine = N(3)-methylpseudouridine(1915) in 23S rRNA + S-adenosyl-L-homocysteine + H(+). Specifically methylates the pseudouridine at position 1915 (m3Psi1915) in 23S rRNA. In Nitrosomonas eutropha (strain DSM 101675 / C91 / Nm57), this protein is Ribosomal RNA large subunit methyltransferase H.